Here is a 440-residue protein sequence, read N- to C-terminus: MVSSEVRDLLAQVPNWSQADRPAAFRTIITTITSSPDPSHFAADLKAVTDAIFLESLGVVATRALVIDLIDALKSLASGGPSADSINSTTSSIWLDVGKAIQQHIQSNPTLATSLVDQTATIYEELLAAAHESQNSFTDAAKTLAAIPLDSSQRRVTDKYKADLWIRIIRNYLEDDDATSAETYLNKLKNIIHNVADDNPVLNLHFKLSAARIQDSNRQFLAASQSYYEISLSPAIAEEERLHTLSMAIKCAVLAPAGPPRSRVLARLYKDERSASLEEFGILEKMFLDRLLARAEVEKFAQGLAPHQLATTSDGSTVLAKAMVEHNLLAVSRLYRNIGFDALGSWLGLDSGNKAEEITARMIEQGRLAGSIDQIDRIIYFESGLEASGEKGSGRAEVPVGKEMRRQDGMVQALAEDLERITDDLLVEFPQLVPAGVPGN.

The PCI domain maps to 216–386 (SNRQFLAASQ…RIIYFESGLE (171 aa)).

The protein belongs to the CSN4 family. In terms of assembly, component of the COP9 signalosome (CSN) complex.

The protein localises to the cytoplasm. It is found in the nucleus. Functionally, component of the COP9 signalosome (CSN) complex that acts as an regulator of the ubiquitin (Ubl) conjugation pathway by mediating the deneddylation of the cullin subunit of SCF-type E3 ubiquitin-protein ligase complexes. The CSN complex is involved in the regulation of the circadian clock through its control of the stability of the SCF(FWD1) complex. This Neurospora crassa (strain ATCC 24698 / 74-OR23-1A / CBS 708.71 / DSM 1257 / FGSC 987) protein is COP9 signalosome complex subunit 4 (csn-4).